Here is an 82-residue protein sequence, read N- to C-terminus: Small ribosomal subunit protein eS21 (82 aa).

This sequence belongs to the eukaryotic ribosomal protein eS21 family.

This chain is Small ribosomal subunit protein eS21 (RPS21), found in Cyanophora paradoxa.